A 621-amino-acid chain; its full sequence is tRNA 5-methylaminomethyl-2-thiouridine biosynthesis bifunctional protein MnmC (621 aa).

The segment at 1–222 (MKNANLSFKG…KRQMSSAVLE (222 aa)) is tRNA (mnm(5)s(2)U34)-methyltransferase. An FAD-dependent cmnm(5)s(2)U34 oxidoreductase region spans residues 250-621 (IGTGVAGLAT…LIRKLKKGLK (372 aa)).

It in the N-terminal section; belongs to the methyltransferase superfamily. tRNA (mnm(5)s(2)U34)-methyltransferase family. This sequence in the C-terminal section; belongs to the DAO family. FAD serves as cofactor.

Its subcellular location is the cytoplasm. It catalyses the reaction 5-aminomethyl-2-thiouridine(34) in tRNA + S-adenosyl-L-methionine = 5-methylaminomethyl-2-thiouridine(34) in tRNA + S-adenosyl-L-homocysteine + H(+). Functionally, catalyzes the last two steps in the biosynthesis of 5-methylaminomethyl-2-thiouridine (mnm(5)s(2)U) at the wobble position (U34) in tRNA. Catalyzes the FAD-dependent demodification of cmnm(5)s(2)U34 to nm(5)s(2)U34, followed by the transfer of a methyl group from S-adenosyl-L-methionine to nm(5)s(2)U34, to form mnm(5)s(2)U34. In Campylobacter concisus (strain 13826), this protein is tRNA 5-methylaminomethyl-2-thiouridine biosynthesis bifunctional protein MnmC.